The following is a 290-amino-acid chain: Putative transport permease ycf38 (290 aa).

7 helical membrane-spanning segments follow: residues valine 21–leucine 41, isoleucine 46–phenylalanine 66, proline 86–phenylalanine 106, phenylalanine 133–leucine 153, phenylalanine 167–leucine 187, leucine 194–alanine 213, and isoleucine 261–phenylalanine 281. The region spanning isoleucine 46–isoleucine 284 is the ABC transmembrane type-2 domain.

The protein belongs to the ABC-2 integral membrane protein family.

It localises to the plastid. The protein resides in the cyanelle membrane. The protein is Putative transport permease ycf38 (ycf38) of Cyanophora paradoxa.